The sequence spans 690 residues: Glycine--tRNA ligase beta subunit (690 aa).

This sequence belongs to the class-II aminoacyl-tRNA synthetase family. Tetramer of two alpha and two beta subunits.

It localises to the cytoplasm. It carries out the reaction tRNA(Gly) + glycine + ATP = glycyl-tRNA(Gly) + AMP + diphosphate. The polypeptide is Glycine--tRNA ligase beta subunit (Desulfitobacterium hafniense (strain Y51)).